A 339-amino-acid chain; its full sequence is Formyl peptide receptor-related sequence 6 (339 aa).

The Extracellular portion of the chain corresponds to 1-23 (MEANFSIPQNGSEVVFYDSTTSR). Asparagine 4 and asparagine 10 each carry an N-linked (GlcNAc...) asparagine glycan. Residues 24–44 (VICIFLVVVLSITFLLGVIGN) form a helical membrane-spanning segment. Over 45–62 (GLVIYVAGFRMTHTVTTI) the chain is Cytoplasmic. The helical transmembrane segment at 63-85 (CYLNLALSDFSYMASLPFQITSI) threads the bilayer. Residues 86-99 (VMNGEWLFGWFLCK) are Extracellular-facing. An intrachain disulfide couples cysteine 98 to cysteine 178. A helical transmembrane segment spans residues 100–120 (FVHMIINVNLFLSIFLITFIA). Residues 121–144 (MDRCICVLHPVWAQNHRTVNVATK) are Cytoplasmic-facing. A helical transmembrane segment spans residues 145–165 (VIFGAWILVLMLIFPHCIFVT). At 166 to 198 (TVKDESGKVHCICNFESWAATPEEQVKVSMTVS) the chain is on the extracellular side. A helical membrane pass occupies residues 199–219 (LISVTISFIIGFSIPMIFIVI). Topologically, residues 220 to 241 (CYGLMAAKIGRRGFVNSSRPLR) are cytoplasmic. A helical transmembrane segment spans residues 242 to 262 (VLTAVAISFFVCWFPFQLIFL). The Extracellular portion of the chain corresponds to 263 to 280 (LGNIGNKETQNNIDTWVN). Residues 281 to 301 (TASTLASFNSCLNPILYVFLG) form a helical membrane-spanning segment. Topologically, residues 302–339 (QQFRERLIYSLSASLERALREDSALNSDKTRNLSSQRL) are cytoplasmic.

This sequence belongs to the G-protein coupled receptor 1 family. As to expression, expressed exclusively in vomeronasal tissue. Expressed in 1.2 % of a subset of sensory neurons located in the apical layer of the vomeronasal organ. Each neuron appears to express only one receptor gene. Expressed in brain, spleen, skeletal muscle and at high level in testis.

The protein localises to the membrane. Functionally, may have an olfactory function associated with the identification of pathogens or of pathogenic states. This chain is Formyl peptide receptor-related sequence 6 (Fpr-rs6), found in Mus musculus (Mouse).